Here is a 141-residue protein sequence, read N- to C-terminus: High mobility group B protein 3 (141 aa).

Basic and acidic residues-rich tracts occupy residues 1 to 12 (MKGAKSKAETRS) and 70 to 110 (GGEK…LEEG). Disordered regions lie at residues 1 to 40 (MKGA…RPSS) and 54 to 141 (KEEH…EDDD). A DNA-binding region (HMG box) is located at residues 35–104 (PKRPSSAFFV…EYEKNMKAYN (70 aa)). Residue S122 is modified to Phosphoserine. The span at 124–141 (VNDEDDAEDGSEEEEDDD) shows a compositional bias: acidic residues.

It belongs to the HMGB family. Expressed in lateral roots, root tips, stems, cotyledons, leaves and flowers (excluding ovary and pedicels).

The protein localises to the nucleus. It is found in the cytoplasm. It localises to the cytosol. Binds preferentially double-stranded DNA. This Arabidopsis thaliana (Mouse-ear cress) protein is High mobility group B protein 3 (HMGB3).